Consider the following 725-residue polypeptide: FYVE, RhoGEF and PH domain-containing protein 3 (725 aa).

The disordered stretch occupies residues 1 to 151 (MESGRGSSTP…KADKDAGLAQ (151 aa)). The span at 124-136 (EEADSDVGEEPDS) shows a compositional bias: acidic residues. Serine 128 is subject to Phosphoserine. One can recognise a DH domain in the interval 157–341 (KLLHIAQELL…STAANHSNAA (185 aa)). A PH 1 domain is found at 370 to 469 (ELIKEGQIQK…WIQIIQATIE (100 aa)). Positions 487–532 (QDEDPSLSPDMPITSTSPVEPVVTTEGSSGAAGLEPRKLSSKTRRD) are disordered. Over residues 500–512 (TSTSPVEPVVTTE) the composition is skewed to low complexity. Residues 521-532 (EPRKLSSKTRRD) are compositionally biased toward basic and acidic residues. The segment at 532-588 (DKEKQSCKSCGETFNSITKRRHHCKLCGAVICGKCSEFKAENSRQSRVCRDCFLTQP) adopts an FYVE-type zinc-finger fold. Residues cysteine 538, cysteine 541, cysteine 555, cysteine 558, cysteine 563, cysteine 566, cysteine 580, and cysteine 583 each contribute to the Zn(2+) site. Residues 604-703 (PSLLCGPLRL…WLETLSTAAH (100 aa)) enclose the PH 2 domain. Positions 703–725 (HGDTAQDSPGALQLQVPMGAAAP) are disordered.

It localises to the cytoplasm. It is found in the cytoskeleton. Its function is as follows. Promotes the formation of filopodia. May activate CDC42, a member of the Ras-like family of Rho- and Rac proteins, by exchanging bound GDP for free GTP. Plays a role in regulating the actin cytoskeleton and cell shape. In Homo sapiens (Human), this protein is FYVE, RhoGEF and PH domain-containing protein 3 (FGD3).